The following is a 321-amino-acid chain: Phospho-N-acetylmuramoyl-pentapeptide-transferase (321 aa).

A run of 10 helical transmembrane segments spans residues 4–24, 51–71, 75–95, 109–129, 139–159, 173–193, 195–215, 222–242, 247–267, and 297–317; these read MVWA…WLIP, TMGG…TVGF, SGVL…DDYI, QKFT…VYGI, GFEV…LLIV, GLAA…ASAG, SDVT…FLFF, MFMG…LALL, LILP…ILQV, and VVYT…LLAM.

It belongs to the glycosyltransferase 4 family. MraY subfamily. Mg(2+) serves as cofactor.

It localises to the cell membrane. It catalyses the reaction UDP-N-acetyl-alpha-D-muramoyl-L-alanyl-gamma-D-glutamyl-meso-2,6-diaminopimeloyl-D-alanyl-D-alanine + di-trans,octa-cis-undecaprenyl phosphate = di-trans,octa-cis-undecaprenyl diphospho-N-acetyl-alpha-D-muramoyl-L-alanyl-D-glutamyl-meso-2,6-diaminopimeloyl-D-alanyl-D-alanine + UMP. The protein operates within cell wall biogenesis; peptidoglycan biosynthesis. In terms of biological role, catalyzes the initial step of the lipid cycle reactions in the biosynthesis of the cell wall peptidoglycan: transfers peptidoglycan precursor phospho-MurNAc-pentapeptide from UDP-MurNAc-pentapeptide onto the lipid carrier undecaprenyl phosphate, yielding undecaprenyl-pyrophosphoryl-MurNAc-pentapeptide, known as lipid I. In Heliobacterium modesticaldum (strain ATCC 51547 / Ice1), this protein is Phospho-N-acetylmuramoyl-pentapeptide-transferase.